A 184-amino-acid chain; its full sequence is MTIEVSNESGIDVSEEELISVARFVIGKMDVNPAAELSMLLLDTAAMADLHMRWMDLPGPTDVMSFPMDELEPGGRPDAPEPGPSMLGDIVLCPEFAAKQAADAGHTLGQELALLTVHGVLHLLGYDHAEPDEEKEMFALQRELLEEWVADQVQAYHQDRQSQKDQRLLDKSRYFDELNHGDTP.

The Zn(2+) site is built by His-118, His-122, and His-128. A disordered region spans residues 156–184; the sequence is YHQDRQSQKDQRLLDKSRYFDELNHGDTP. Residues 157 to 184 are compositionally biased toward basic and acidic residues; the sequence is HQDRQSQKDQRLLDKSRYFDELNHGDTP.

This sequence belongs to the endoribonuclease YbeY family. Zn(2+) is required as a cofactor.

The protein resides in the cytoplasm. Functionally, single strand-specific metallo-endoribonuclease involved in late-stage 70S ribosome quality control and in maturation of the 3' terminus of the 16S rRNA. The polypeptide is Endoribonuclease YbeY (Mycolicibacterium vanbaalenii (strain DSM 7251 / JCM 13017 / BCRC 16820 / KCTC 9966 / NRRL B-24157 / PYR-1) (Mycobacterium vanbaalenii)).